We begin with the raw amino-acid sequence, 104 residues long: Urease subunit beta (104 aa).

It belongs to the urease beta subunit family. In terms of assembly, heterotrimer of UreA (gamma), UreB (beta) and UreC (alpha) subunits. Three heterotrimers associate to form the active enzyme.

The protein localises to the cytoplasm. It catalyses the reaction urea + 2 H2O + H(+) = hydrogencarbonate + 2 NH4(+). It functions in the pathway nitrogen metabolism; urea degradation; CO(2) and NH(3) from urea (urease route): step 1/1. This chain is Urease subunit beta, found in Rhodopseudomonas palustris (strain BisB5).